The following is a 331-amino-acid chain: Aspartate carbamoyltransferase catalytic subunit (331 aa).

The carbamoyl phosphate site is built by Arg76 and Thr77. Lys104 contributes to the L-aspartate binding site. The carbamoyl phosphate site is built by Arg126, His154, and Gln157. Residues Arg187 and Arg246 each coordinate L-aspartate. Carbamoyl phosphate contacts are provided by Gly287 and Pro288.

It belongs to the aspartate/ornithine carbamoyltransferase superfamily. ATCase family. Heterododecamer (2C3:3R2) of six catalytic PyrB chains organized as two trimers (C3), and six regulatory PyrI chains organized as three dimers (R2).

The enzyme catalyses carbamoyl phosphate + L-aspartate = N-carbamoyl-L-aspartate + phosphate + H(+). Its pathway is pyrimidine metabolism; UMP biosynthesis via de novo pathway; (S)-dihydroorotate from bicarbonate: step 2/3. In terms of biological role, catalyzes the condensation of carbamoyl phosphate and aspartate to form carbamoyl aspartate and inorganic phosphate, the committed step in the de novo pyrimidine nucleotide biosynthesis pathway. This is Aspartate carbamoyltransferase catalytic subunit from Dehalococcoides mccartyi (strain CBDB1).